Here is a 341-residue protein sequence, read N- to C-terminus: Cyanuric acid amidohydrolase (341 aa).

Residues 1 to 90 (MAPIEILKFP…HVTFFLRSPG (90 aa)) form an RU A region. Residues Arg51 and 71-72 (SG) contribute to the substrate site. Residues 95–229 (GLSAAVGHTR…CHILVLASTS (135 aa)) form an RU B region. Residue Lys144 is part of the active site. Substrate-binding positions include Arg176 and 212–213 (SS). Ser212 (nucleophile) is an active-site residue. The RU C stretch occupies residues 235-341 (LHAVSRPMAD…SLCLVYETSI (107 aa)). Glu273 contacts Mg(2+). Substrate is bound by residues Arg300 and 319–320 (SG). Residues Ala322, Gln325, Gly326, Pro327, and Gly330 each coordinate Mg(2+).

This sequence belongs to the cyclic amide hydrolase (CyAH) family. Homotetramer.

It carries out the reaction cyanurate + H2O = 1-carboxybiuret + H(+). Its pathway is xenobiotic degradation; atrazine degradation; biuret from cyanurate: step 1/1. With respect to regulation, inhibited by barbituric acid. Functionally, responsible for the hydrolysis of cyanuric acid, an intermediate formed during catabolism of s-triazine based compounds in herbicides such as atrazine and polymers such as melamine. Catalyzes the hydrolytic opening of the s-triazine ring of cyanuric acid (2,4,6-trihydroxy-s-triazine) to yield carbon dioxide and carboxybiuret, which spontaneously decarboxylates to biuret. Only active on cyanuric acid and N-methylisocyanuric acid. This Sarocladium sp protein is Cyanuric acid amidohydrolase.